The following is a 496-amino-acid chain: Chromosomal replication initiator protein DnaA (496 aa).

The domain I, interacts with DnaA modulators stretch occupies residues 1–76 (MKMDSAVSEE…TELWQEENPQ (76 aa)). Positions 76 to 150 (QILKVEVVVR…AAATDAVLGS (75 aa)) are domain II. A domain III, AAA+ region region spans residues 151-373 (PLDPRYTFDT…GAFNQLLFRQ (223 aa)). Positions 197, 199, 200, and 201 each coordinate ATP. A domain IV, binds dsDNA region spans residues 374–496 (SFEPNISIDR…LKRLINDQAA (123 aa)).

This sequence belongs to the DnaA family. Oligomerizes as a right-handed, spiral filament on DNA at oriC.

The protein localises to the cytoplasm. Functionally, plays an essential role in the initiation and regulation of chromosomal replication. ATP-DnaA binds to the origin of replication (oriC) to initiate formation of the DNA replication initiation complex once per cell cycle. Binds the DnaA box (a 9 base pair repeat at the origin) and separates the double-stranded (ds)DNA. Forms a right-handed helical filament on oriC DNA; dsDNA binds to the exterior of the filament while single-stranded (ss)DNA is stabiized in the filament's interior. The ATP-DnaA-oriC complex binds and stabilizes one strand of the AT-rich DNA unwinding element (DUE), permitting loading of DNA polymerase. After initiation quickly degrades to an ADP-DnaA complex that is not apt for DNA replication. Binds acidic phospholipids. This Brucella suis biovar 1 (strain 1330) protein is Chromosomal replication initiator protein DnaA.